The following is a 611-amino-acid chain: Probable methyltransferase PMT1 (611 aa).

Topologically, residues 1–11 are cytoplasmic; the sequence is MRGRSEGGKKK. The helical; Signal-anchor for type II membrane protein transmembrane segment at 12 to 32 threads the bilayer; the sequence is PVIVLLCVASVVLVFVYLFFG. Residues 33-611 are Lumenal-facing; sequence SSNHKAIEYG…LTSESLRDLE (579 aa). Asn-345 carries N-linked (GlcNAc...) asparagine glycosylation.

This sequence belongs to the methyltransferase superfamily.

Its subcellular location is the golgi apparatus membrane. This Arabidopsis thaliana (Mouse-ear cress) protein is Probable methyltransferase PMT1.